The sequence spans 254 residues: Phosphoribosylaminoimidazole-succinocarboxamide synthase (254 aa).

It belongs to the SAICAR synthetase family.

The enzyme catalyses 5-amino-1-(5-phospho-D-ribosyl)imidazole-4-carboxylate + L-aspartate + ATP = (2S)-2-[5-amino-1-(5-phospho-beta-D-ribosyl)imidazole-4-carboxamido]succinate + ADP + phosphate + 2 H(+). Its pathway is purine metabolism; IMP biosynthesis via de novo pathway; 5-amino-1-(5-phospho-D-ribosyl)imidazole-4-carboxamide from 5-amino-1-(5-phospho-D-ribosyl)imidazole-4-carboxylate: step 1/2. This chain is Phosphoribosylaminoimidazole-succinocarboxamide synthase, found in Brucella melitensis biotype 2 (strain ATCC 23457).